A 143-amino-acid chain; its full sequence is MSHDSDDKTFPYQKDDAELRRRLTPMQYEVTQHAATERAFTGEYTDTEDAGIYKCVVCSTPLFESGAKFHSGCGWPSYFKPLNGEVIDEKIDYSHGMVRVEVRCNHCGAHLGHVFEDGPRDKTGLRYCINSAALNFESRPENE.

The MsrB domain occupies 16 to 139; that stretch reads DAELRRRLTP…NSAALNFESR (124 aa). The Zn(2+) site is built by cysteine 55, cysteine 58, cysteine 104, and cysteine 107. Cysteine 128 functions as the Nucleophile in the catalytic mechanism.

It belongs to the MsrB Met sulfoxide reductase family. The cofactor is Zn(2+).

The enzyme catalyses L-methionyl-[protein] + [thioredoxin]-disulfide + H2O = L-methionyl-(R)-S-oxide-[protein] + [thioredoxin]-dithiol. The sequence is that of Peptide methionine sulfoxide reductase MsrB from Burkholderia cenocepacia (strain ATCC BAA-245 / DSM 16553 / LMG 16656 / NCTC 13227 / J2315 / CF5610) (Burkholderia cepacia (strain J2315)).